Consider the following 93-residue polypeptide: Large ribosomal subunit protein uL23cz/uL23cy (93 aa).

This sequence belongs to the universal ribosomal protein uL23 family. Part of the 50S ribosomal subunit.

It localises to the plastid. The protein localises to the chloroplast. In terms of biological role, binds to 23S rRNA. This Nymphaea alba (White water-lily) protein is Large ribosomal subunit protein uL23cz/uL23cy (rpl23-A).